Reading from the N-terminus, the 211-residue chain is MYQPDFPPVPFRLGLYPVVDSVQWIERLLDAGVRTLQLRIKDRRDEEVEADVVAAIALGRRYNARLFINDYWRLAIKHQAYGVHLGQEDLQATDLNAIRAAGLRLGVSTHDDMEIDVALAARPSYIALGHVFPTQTKQMPSAPQGLEQLARHVERLADYPTVAIGGISLARAPAVIATGVGSIAVVSAITQAADWRLATAQLLEIAGVGDE.

4-amino-2-methyl-5-(diphosphooxymethyl)pyrimidine contacts are provided by residues 37–41 (QLRIK) and Asn-69. Mg(2+) is bound by residues Asp-70 and Asp-89. Ser-108 contacts 4-amino-2-methyl-5-(diphosphooxymethyl)pyrimidine. 134–136 (TQT) is a binding site for 2-[(2R,5Z)-2-carboxy-4-methylthiazol-5(2H)-ylidene]ethyl phosphate. Lys-137 contributes to the 4-amino-2-methyl-5-(diphosphooxymethyl)pyrimidine binding site. 2-[(2R,5Z)-2-carboxy-4-methylthiazol-5(2H)-ylidene]ethyl phosphate contacts are provided by residues Gly-166 and 186 to 187 (VS).

This sequence belongs to the thiamine-phosphate synthase family. Mg(2+) is required as a cofactor.

It catalyses the reaction 2-[(2R,5Z)-2-carboxy-4-methylthiazol-5(2H)-ylidene]ethyl phosphate + 4-amino-2-methyl-5-(diphosphooxymethyl)pyrimidine + 2 H(+) = thiamine phosphate + CO2 + diphosphate. The enzyme catalyses 2-(2-carboxy-4-methylthiazol-5-yl)ethyl phosphate + 4-amino-2-methyl-5-(diphosphooxymethyl)pyrimidine + 2 H(+) = thiamine phosphate + CO2 + diphosphate. It carries out the reaction 4-methyl-5-(2-phosphooxyethyl)-thiazole + 4-amino-2-methyl-5-(diphosphooxymethyl)pyrimidine + H(+) = thiamine phosphate + diphosphate. It participates in cofactor biosynthesis; thiamine diphosphate biosynthesis; thiamine phosphate from 4-amino-2-methyl-5-diphosphomethylpyrimidine and 4-methyl-5-(2-phosphoethyl)-thiazole: step 1/1. Functionally, condenses 4-methyl-5-(beta-hydroxyethyl)thiazole monophosphate (THZ-P) and 2-methyl-4-amino-5-hydroxymethyl pyrimidine pyrophosphate (HMP-PP) to form thiamine monophosphate (TMP). The sequence is that of Thiamine-phosphate synthase from Escherichia coli (strain SE11).